Consider the following 2798-residue polypeptide: Nipped-B-like protein (2798 aa).

Polar residues-rich tracts occupy residues 128–173 (LSQN…QNSP) and 191–208 (HPSS…SVSS). A disordered region spans residues 128-338 (LSQNSMHSSP…IKLGKDEKDQ (211 aa)). Phosphoserine is present on residues Ser-150 and Ser-162. Residues 234–249 (HHADNPRHGSSDDYLH) are compositionally biased toward basic and acidic residues. Ser-243, Ser-256, Ser-274, Ser-280, Ser-284, Ser-301, Ser-306, Ser-318, and Ser-350 each carry phosphoserine. A compositionally biased stretch (basic and acidic residues) spans 482-500 (RESAIERERFSKEVQDKDK). The segment at 482-940 (RESAIERERF…NKAEFPSYLL (459 aa)) is disordered. Residues 523–534 (PASQETGSTGNG) are compositionally biased toward polar residues. Basic and acidic residues-rich tracts occupy residues 562 to 572 (DSIKKPEETKQ), 593 to 625 (PENH…ESKP), 634 to 663 (KSNE…ESKQ), 672 to 685 (KQNE…KPND), and 694 to 899 (ENTK…DTNK). A phosphothreonine mark is found at Thr-713 and Thr-746. Ser-906 is modified (phosphoserine). The segment covering 908–933 (NSKDDKRTEGNRSKVDSNKAHTDNKA) has biased composition (basic and acidic residues). The PxVxL motif signature appears at 990-1003 (NKGAKPVVVLQKLS). Disordered stretches follow at residues 1011–1041 (IKDR…DQSV) and 1054–1186 (ESTM…TPEE). Lys-1076 is subject to N6-acetyllysine. Residues Ser-1083, Ser-1084, and Ser-1090 each carry the phosphoserine modification. Residues 1083–1094 (SSDEDNDSDEAF) are compositionally biased toward acidic residues. Residues 1103 to 1133 (KDDDKAWEYEERDRRSSGDHRRSGHSHDGRR) are compositionally biased toward basic and acidic residues. Phosphoserine is present on residues Ser-1144, Ser-1146, and Ser-1148. Residue Tyr-1153 is modified to Phosphotyrosine. Ser-1154 bears the Phosphoserine mark. The segment covering 1165 to 1176 (KMKKKEKQKKRK) has biased composition (basic residues). The residue at position 1183 (Thr-1183) is a Phosphothreonine. Ser-1191 carries the post-translational modification Phosphoserine. Basic and acidic residues predominate over residues 1685–1705 (AMKSQKDEESSDATHHAKELE). The disordered stretch occupies residues 1685-1706 (AMKSQKDEESSDATHHAKELET). 5 HEAT repeats span residues 1761-1799 (AQSF…VDPS), 1837-1875 (PQLA…EQPT), 1939-1978 (YDWF…HILK), 2221-2261 (VNLK…LKEM), and 2307-2345 (LIHP…KYAG). Residues 2467–2483 (VKDKRKERKTSPAKENE) are compositionally biased toward basic and acidic residues. 2 disordered regions span residues 2467–2514 (VKDK…DDIN) and 2645–2690 (TSLL…DSTE). Residues Ser-2487, Ser-2503, Ser-2505, Ser-2507, Ser-2509, Ser-2646, and Ser-2652 each carry the phosphoserine modification. Acidic residues predominate over residues 2504 to 2513 (ESDSDSEDDI). The residue at position 2661 (Thr-2661) is a Phosphothreonine. The residue at position 2666 (Ser-2666) is a Phosphoserine.

Belongs to the SCC2/Nipped-B family. Heterodimerizes with MAU2/SCC4 to form the cohesin loading complex. The NIPBL-MAU2 heterodimer interacts with the cohesin complex composed of SMC1A/B and SMC3 heterodimer, RAD21 and STAG1/SA1. NIPBL directly contacts all members of the complex, RAD21, SMC1A/B, SMC3 and STAG1. Interacts directly (via PxVxL motif) with CBX3 and CBX5. Interacts with ZNF609 (via N-terminus). Interacts with the multiprotein complex Integrator. Interacts with BRD4. In terms of tissue distribution, spermatocytes and oocytes (at protein level).

It is found in the nucleus. The protein localises to the chromosome. Plays an important role in the loading of the cohesin complex on to DNA. Forms a heterodimeric complex (also known as cohesin loading complex) with MAU2/SCC4 which mediates the loading of the cohesin complex onto chromatin. Plays a role in cohesin loading at sites of DNA damage. Its recruitment to double-strand breaks (DSBs) sites occurs in a CBX3-, RNF8- and RNF168-dependent manner whereas its recruitment to UV irradiation-induced DNA damage sites occurs in a ATM-, ATR-, RNF8- and RNF168-dependent manner. Along with ZNF609, promotes cortical neuron migration during brain development by regulating the transcription of crucial genes in this process. Preferentially binds promoters containing paused RNA polymerase II. Up-regulates the expression of SEMA3A, NRP1, PLXND1 and GABBR2 genes, among others. The protein is Nipped-B-like protein (Nipbl) of Mus musculus (Mouse).